Consider the following 126-residue polypeptide: Spermidine export protein MdtJ (126 aa).

The next 4 helical transmembrane spans lie at 1–21, 30–50, 54–74, and 81–101; these read MIYW…TLSM, ITGH…LSLA, VALG…ITLF, and EPFS…IVML.

The protein belongs to the drug/metabolite transporter (DMT) superfamily. Small multidrug resistance (SMR) (TC 2.A.7.1) family. MdtJ subfamily. In terms of assembly, forms a complex with MdtI.

It is found in the cell inner membrane. Catalyzes the excretion of spermidine. In Sodalis glossinidius (strain morsitans), this protein is Spermidine export protein MdtJ.